The primary structure comprises 437 residues: GTPase Der (437 aa).

EngA-type G domains lie at 3 to 167 and 176 to 352; these read NLVA…KKES and PRFA…ENRM. GTP is bound by residues 9 to 16, 56 to 60, 119 to 122, 182 to 189, 229 to 233, and 294 to 297; these read GRPNVGKS, DTGGW, NKTD, GRPNAGKS, DTAGI, and NKWD. The region spanning 353–437 is the KH-like domain; that stretch reads IKIPTARLNE…TPINIYIRQK (85 aa).

This sequence belongs to the TRAFAC class TrmE-Era-EngA-EngB-Septin-like GTPase superfamily. EngA (Der) GTPase family. In terms of assembly, associates with the 50S ribosomal subunit.

In terms of biological role, GTPase that plays an essential role in the late steps of ribosome biogenesis. In Bacteroides fragilis (strain ATCC 25285 / DSM 2151 / CCUG 4856 / JCM 11019 / LMG 10263 / NCTC 9343 / Onslow / VPI 2553 / EN-2), this protein is GTPase Der.